We begin with the raw amino-acid sequence, 387 residues long: Fructose-1,6-bisphosphate aldolase/phosphatase (387 aa).

The active-site Proton acceptor; for FBP phosphatase activity is the D13. Residues D13, H20, D54, and D55 each coordinate Mg(2+). H20 lines the beta-D-fructose 1,6-bisphosphate pocket. Position 20 (H20) interacts with dihydroxyacetone phosphate. Y92 is a binding site for beta-D-fructose 1,6-bisphosphate. Position 96 (Q96) interacts with Mg(2+). 105–106 is a binding site for beta-D-fructose 1,6-bisphosphate; sequence GN. Mg(2+) is bound at residue D133. K134 provides a ligand contact to beta-D-fructose 1,6-bisphosphate. Residue K134 participates in dihydroxyacetone phosphate binding. Y229 acts as the Proton donor/acceptor; for FBP aldolase activity in catalysis. K232, D233, and D234 together coordinate Mg(2+). K232 serves as the catalytic Schiff-base intermediate with DHAP; for FBP aldolase activity. Beta-D-fructose 1,6-bisphosphate contacts are provided by residues 242-243, R266, D287, and Y348; that span reads QS. R266 and D287 together coordinate dihydroxyacetone phosphate.

This sequence belongs to the FBP aldolase/phosphatase family. In terms of assembly, homooctamer; dimer of tetramers. The cofactor is Mg(2+).

It carries out the reaction beta-D-fructose 1,6-bisphosphate + H2O = beta-D-fructose 6-phosphate + phosphate. It catalyses the reaction beta-D-fructose 1,6-bisphosphate = D-glyceraldehyde 3-phosphate + dihydroxyacetone phosphate. It participates in carbohydrate biosynthesis; gluconeogenesis. Functionally, catalyzes two subsequent steps in gluconeogenesis: the aldol condensation of dihydroxyacetone phosphate (DHAP) and glyceraldehyde-3-phosphate (GA3P) to fructose-1,6-bisphosphate (FBP), and the dephosphorylation of FBP to fructose-6-phosphate (F6P). In Ignicoccus hospitalis (strain KIN4/I / DSM 18386 / JCM 14125), this protein is Fructose-1,6-bisphosphate aldolase/phosphatase.